The following is a 466-amino-acid chain: 3-isopropylmalate dehydratase large subunit (466 aa).

Positions 347, 407, and 410 each coordinate [4Fe-4S] cluster.

This sequence belongs to the aconitase/IPM isomerase family. LeuC type 1 subfamily. In terms of assembly, heterodimer of LeuC and LeuD. It depends on [4Fe-4S] cluster as a cofactor.

The catalysed reaction is (2R,3S)-3-isopropylmalate = (2S)-2-isopropylmalate. The protein operates within amino-acid biosynthesis; L-leucine biosynthesis; L-leucine from 3-methyl-2-oxobutanoate: step 2/4. In terms of biological role, catalyzes the isomerization between 2-isopropylmalate and 3-isopropylmalate, via the formation of 2-isopropylmaleate. The polypeptide is 3-isopropylmalate dehydratase large subunit (Blochmanniella floridana).